Here is a 193-residue protein sequence, read N- to C-terminus: Probable nicotinate-nucleotide adenylyltransferase (193 aa).

This sequence belongs to the NadD family.

It carries out the reaction nicotinate beta-D-ribonucleotide + ATP + H(+) = deamido-NAD(+) + diphosphate. The protein operates within cofactor biosynthesis; NAD(+) biosynthesis; deamido-NAD(+) from nicotinate D-ribonucleotide: step 1/1. Its function is as follows. Catalyzes the reversible adenylation of nicotinate mononucleotide (NaMN) to nicotinic acid adenine dinucleotide (NaAD). This is Probable nicotinate-nucleotide adenylyltransferase from Coprothermobacter proteolyticus (strain ATCC 35245 / DSM 5265 / OCM 4 / BT).